A 172-amino-acid polypeptide reads, in one-letter code: Translationally-controlled tumor protein homolog (172 aa).

Residues Met1–Cys172 enclose the TCTP domain.

The protein belongs to the TCTP family. Expressed by the venom gland.

Its subcellular location is the secreted. Functionally, venom protein that causes edema, enhances vascular permeability and is likely related to the inflammatory activity of the venom. This Crotalus adamanteus (Eastern diamondback rattlesnake) protein is Translationally-controlled tumor protein homolog.